The following is a 312-amino-acid chain: Glutaminase (312 aa).

The substrate site is built by Ser67, Asn118, Glu162, Asn169, Tyr193, Tyr245, and Val263.

It belongs to the glutaminase family. As to quaternary structure, homotetramer.

It carries out the reaction L-glutamine + H2O = L-glutamate + NH4(+). The protein is Glutaminase of Bordetella avium (strain 197N).